The sequence spans 158 residues: ATP synthase subunit b', chloroplastic (158 aa).

Residues 21–41 form a helical membrane-spanning segment; sequence GTLPLMALQFLILMLLLNTIF.

The protein belongs to the ATPase B chain family. F-type ATPases have 2 components, F(1) - the catalytic core - and F(0) - the membrane proton channel. F(1) has five subunits: alpha(3), beta(3), gamma(1), delta(1), epsilon(1). F(0) has four main subunits: a(1), b(1), b'(1) and c(10-14). The alpha and beta chains form an alternating ring which encloses part of the gamma chain. F(1) is attached to F(0) by a central stalk formed by the gamma and epsilon chains, while a peripheral stalk is formed by the delta, b and b' chains.

The protein resides in the plastid. It localises to the chloroplast thylakoid membrane. Functionally, f(1)F(0) ATP synthase produces ATP from ADP in the presence of a proton or sodium gradient. F-type ATPases consist of two structural domains, F(1) containing the extramembraneous catalytic core and F(0) containing the membrane proton channel, linked together by a central stalk and a peripheral stalk. During catalysis, ATP synthesis in the catalytic domain of F(1) is coupled via a rotary mechanism of the central stalk subunits to proton translocation. Component of the F(0) channel, it forms part of the peripheral stalk, linking F(1) to F(0). The b'-subunit is a diverged and duplicated form of b found in plants and photosynthetic bacteria. The chain is ATP synthase subunit b', chloroplastic from Porphyra purpurea (Red seaweed).